The chain runs to 111 residues: Type III endosome membrane protein TEMP (111 aa).

The Extracellular portion of the chain corresponds to 1-27; that stretch reads MIGGNTTIISGAINASTEAPGLGTGGR. Asn-5 carries N-linked (GlcNAc...) asparagine glycosylation. The chain crosses the membrane as a helical; Signal-anchor for type III membrane protein span at residues 28–48; that stretch reads AWPVLVGVVLGAVVLSILIAL. Topologically, residues 49–111 are cytoplasmic; that stretch reads AAKCHLCRRY…TTGSRDHFSL (63 aa). The segment at 64 to 111 is disordered; that stretch reads HRPLSSAGGGNRPPVGEDEDDDGFIEDNYIQPGAGEMETTGSRDHFSL. Acidic residues predominate over residues 79-88; it reads GEDEDDDGFI.

In terms of tissue distribution, expressed in stomach, kidney, large and small intestine and kidney.

It localises to the membrane. Its subcellular location is the early endosome. The protein resides in the recycling endosome. It is found in the cell membrane. Its function is as follows. May be involved in membrane trafficking between endosomes and plasma membrane. The protein is Type III endosome membrane protein TEMP of Mus musculus (Mouse).